A 97-amino-acid chain; its full sequence is MTRRGCWPHRIIFSLILLTWTHVTLAALIRSHTFSNWPKPPCKMYYPIDPDYEANCPDVIALVCATNGLNYKNECFFCIDRWEFGPHIEFVKYGKCE.

The first 26 residues, 1–26 (MTRRGCWPHRIIFSLILLTWTHVTLA), serve as a signal peptide directing secretion. The region spanning 36 to 97 (NWPKPPCKMY…IEFVKYGKCE (62 aa)) is the Kazal-like domain. 3 disulfide bridges follow: Cys42-Cys78, Cys56-Cys75, and Cys64-Cys96.

In terms of tissue distribution, restricted to the epididymis, with highest levels in the initial segment, including epithelial cells, lumen, and sperm (at protein level). Localizes to the sperm heads, where it is restricted to the acrosomal region in epididymal spermatozoa, but not in testicular spermatozoa (at protein level).

Its subcellular location is the secreted. Functionally, may be a serine protease inhibitor. Essential for sperm maturation and fertility. Inhibits sperm acrosome reaction, protecting sperm from premature reaction. The protein is Serine protease inhibitor Kazal-type 13 (Spink13) of Rattus norvegicus (Rat).